The sequence spans 377 residues: Acetyltransferase ple2 (377 aa).

A signal peptide spans 1–27 (MKPFSPELLVLSFILLVLSCAIRPAKG). The next 4 helical transmembrane spans lie at 29–49 (WILW…TTGD), 56–76 (IANN…LTDV), 176–196 (IAAW…ALSL), and 258–278 (PALY…HAIG).

Belongs to the wax synthase family.

Its subcellular location is the membrane. It functions in the pathway secondary metabolite biosynthesis; terpenoid biosynthesis. Functionally, acetyltransferase; part of the gene cluster that mediates the biosynthesis of pleuromutilin, a tricyclic diterpene showing antibacterial properties. The geranylgeranyl diphosphate (GGPP) synthase ple4 catalyzes the first step in pleuromutilin biosynthesis. GGPP is then substrate of the premutilin synthase (PS) ple3 to yield premutilin. Premutilin synthase is a bifunctional enzyme composed of the fusion of a class II diterpene cyclase (DTC) and a class I diterpene synthase (DTS), with the corresponding domains and active sites containing characteristic aspartate-rich motifs. GGPP is first converted to mutildienyl-diphosphate (MPP) at the class II DTC site. MPP is subsequently further cyclized at the class I DTS site, followed by a 1,5-hydride shift and addition of water prior to terminating deprotonation, to yield premutilin. The cytochrome P450 monooxygenases ple5 and ple6 hydroxylate premutilin at C-11 and C-3, respectively, producing 11-hydroxypremutilin and 3-hydroxypremutilin. The combination of the actions of both ple5 and ple6 leads to the production of 3,11-dihydroxypremutilin. The short chain dehydrogenase ple7 further converts 3,11-dihydroxypremutilin into mutilin. The acetyltransferase ple2 then acetylates mutilin to produce 14-O-acetylmutilin. Finally, the cytochrome P450 monooxygenase ple1 catalyzes hydroxylation on the alpha position of the acetyl side chain of 14-O-acetylmutilin to yield pleuromutilin. This is Acetyltransferase ple2 from Rhodocybe pseudopiperita (Clitopilus pseudopiperitus).